The following is a 237-amino-acid chain: Purine nucleoside phosphorylase DeoD-type (237 aa).

Position 5 (His5) interacts with a purine D-ribonucleoside. Residues Gly21, Arg25, Arg44, and 88-91 (RVGS) each bind phosphate. A purine D-ribonucleoside-binding positions include 180–182 (EME) and 204–205 (SD). Catalysis depends on Asp205, which acts as the Proton donor.

This sequence belongs to the PNP/UDP phosphorylase family. Homohexamer; trimer of homodimers.

The enzyme catalyses a purine D-ribonucleoside + phosphate = a purine nucleobase + alpha-D-ribose 1-phosphate. It carries out the reaction a purine 2'-deoxy-D-ribonucleoside + phosphate = a purine nucleobase + 2-deoxy-alpha-D-ribose 1-phosphate. Its function is as follows. Catalyzes the reversible phosphorolytic breakdown of the N-glycosidic bond in the beta-(deoxy)ribonucleoside molecules, with the formation of the corresponding free purine bases and pentose-1-phosphate. In Edwardsiella ictaluri (strain 93-146), this protein is Purine nucleoside phosphorylase DeoD-type.